Here is an 874-residue protein sequence, read N- to C-terminus: Alanine--tRNA ligase (874 aa).

Positions 562, 566, 664, and 668 each coordinate Zn(2+).

It belongs to the class-II aminoacyl-tRNA synthetase family. Requires Zn(2+) as cofactor.

Its subcellular location is the cytoplasm. It catalyses the reaction tRNA(Ala) + L-alanine + ATP = L-alanyl-tRNA(Ala) + AMP + diphosphate. In terms of biological role, catalyzes the attachment of alanine to tRNA(Ala) in a two-step reaction: alanine is first activated by ATP to form Ala-AMP and then transferred to the acceptor end of tRNA(Ala). Also edits incorrectly charged Ser-tRNA(Ala) and Gly-tRNA(Ala) via its editing domain. This Neisseria meningitidis serogroup B (strain ATCC BAA-335 / MC58) protein is Alanine--tRNA ligase.